The chain runs to 707 residues: F-box/WD repeat-containing protein 7 (707 aa).

Residues 1–151 (MNQELLSVGS…SVTNSSSIVD (151 aa)) form a disordered region. Residue Ser26 is modified to Phosphoserine; by ATM. The span at 57-68 (GEVVGVEPRPGG) shows a compositional bias: low complexity. A compositionally biased stretch (polar residues) spans 69 to 84 (QNDSQQGQLEENNNRF). Residues 87-129 (VDEDSSGNQEEQEEDEEHAGEQDEEDEEEEEMDQESDDFDQSD) show a composition bias toward acidic residues. Positions 130-139 (DSSREDEHTH) are enriched in basic and acidic residues. Residue Thr205 is modified to Phosphothreonine. Phosphoserine; by SGK1 is present on Ser227. One can recognise an F-box domain in the interval 278–324 (RDFISLLPKELALYVLSFLEPKDLLQAAQTCRYWRILAEDNLLWREK). WD repeat units lie at residues 378–418 (GHDD…RTLV), 420–456 (HTGGVWSSQMRDNIIISGSTDRTLKVWNAETGECIHT), 459–498 (GHTSTVRCMHLHEKRVVSGSRDATLRVWDIETGQCLHVLM), 500–536 (HVAAVRCVQYDGRRVVSGAYDFMVKVWDPETETCLHT), 539–578 (GHTNRVYSLQFDGIHVVSGSLDTSIRVWDVETGNCIHTLT), 580–618 (HQSLTSGMELKDNILVSGNADSTVKIWDIKTGQCLQTLQ), and 622–659 (KHQSAVTCLQFNKNFVITSSDDGTVKLWDLKTGEFIRN).

In terms of assembly, homodimer; homodimerization plays a role in substrate binding and/or ubiquitination and degradation. Component of the SCF(FBXW7) complex consisting of CUL1, RBX1, SKP1 and FBXW7. Interacts (via F-box domain) with SKP1. Interacts (via F-box domain) with pseudophosphatase STYX; the interaction is direct and prevents FBXW7 interaction with SKP1. Interacts with cyclin-E (CCNE1 or CCNE2). Interacts with PSEN1. Forms a trimeric complex with NOTCH1 and SGK1. Interacts with NOTCH1 intracellular domain/NICD and NOTCH4 intracellular domain/NICD. Interacts with NOTCH2 intracellular domain (N2ICD). Interacts with MYC (when phosphorylated). Interacts with USP28, counteracting ubiquitination of MYC. Interacts with JUN. Found in a complex with JUN and PRR7. Interacts with JUN and PRR7; the interaction inhibits ubiquitination-mediated JUN degradation, promoting its phosphorylation and transcriptional activity. Interacts (when phosphorylated at Thr-205) with PIN1, disrupting FBXW7 dimerization and promoting FBXW7 autoubiquitination and degradation. Interacts with UBE2QL1. Interacts with FAM83D; promotes FBXW7 degradation. Interacts with MYCN; FBXW7 competes with AURKA for binding to unphosphorylated MYCN but not for binding to phosphorylated MYCN. Interacts with STOML1. Interacts with NFE2L1. Interacts with USP36, counteracting ubiquitination of MYC. Interacts with NR1D1. Interacts with RICTOR; mediates RICTOR ubiquitination and degradation. Interacts with USP38, counteracting ubiquitination of MYC. As to quaternary structure, (Microbial infection) Interacts (via WD repeats) with SV40 large T antigen (via CPD region). Post-translationally, phosphorylation at Thr-205 promotes interaction with PIN1, leading to disrupt FBXW7 dimerization and promoting FBXW7 autoubiquitination and degradation. Phosphorylated by ATM at Ser-26 in response to DNA damage, promoting recruitment to DNA damage sites and 'Lys-63'-linked ubiquitination of phosphorylated XRCC4. In terms of processing, ubiquitinated: autoubiquitinates following phosphorylation at Thr-205 and subsequent interaction with PIN1. Ubiquitination leads to its proteasomal degradation. Widely expressed. In terms of tissue distribution, expressed in brain.

It is found in the nucleus. It localises to the nucleoplasm. The protein resides in the chromosome. The protein localises to the cytoplasm. Its subcellular location is the nucleolus. It functions in the pathway protein modification; protein ubiquitination. Functionally, substrate recognition component of a SCF (SKP1-CUL1-F-box protein) E3 ubiquitin-protein ligase complex which mediates the ubiquitination and subsequent proteasomal degradation of target proteins. Recognizes and binds phosphorylated sites/phosphodegrons within target proteins and thereafter brings them to the SCF complex for ubiquitination. Identified substrates include cyclin-E (CCNE1 or CCNE2), DISC1, JUN, MYC, NOTCH1 released notch intracellular domain (NICD), NFE2L1, NOTCH2, MCL1, MLST8, RICTOR, and probably PSEN1. Acts as a negative regulator of JNK signaling by binding to phosphorylated JUN and promoting its ubiquitination and subsequent degradation. Involved in bone homeostasis and negative regulation of osteoclast differentiation. Regulates the amplitude of the cyclic expression of hepatic core clock genes and genes involved in lipid and glucose metabolism via ubiquitination and proteasomal degradation of their transcriptional repressor NR1D1; CDK1-dependent phosphorylation of NR1D1 is necessary for SCF(FBXW7)-mediated ubiquitination. Also able to promote 'Lys-63'-linked ubiquitination in response to DNA damage. The SCF(FBXW7) complex facilitates double-strand break repair following phosphorylation by ATM: phosphorylation promotes localization to sites of double-strand breaks and 'Lys-63'-linked ubiquitination of phosphorylated XRCC4, enhancing DNA non-homologous end joining. This Homo sapiens (Human) protein is F-box/WD repeat-containing protein 7.